Reading from the N-terminus, the 1690-residue chain is MPMSSFKRKIKAIQIKIASPDVIRSWSGGEVKKPETINYRTFKPERDGLFCERIFGPVKDYECACGKYKGKKYEGTVCERCGVRVESREARRKRMGHIELAAPAVHIWYLESIPSVLGTLLNMNVSDLENIIYYGSRRVIERAFIVTDPKDTPFAQGDIIYETEYRIYRKKWDFEVEQAFIVKNPRSPVLSDIDGEVILRTEKTVTGREITWIIVRNVNRAEHTVLPGMIITVKDGQEVEKGQDLTREMNVDPLYAPFDGHVEIDEISNTITVKPLTTSKDQPVVFTVPYGARVLVSNGQKVKKGDQLTTSTTLPAVKASISGRVKFGSNLNVRALEDGNFEVLSSGNVYIEQVIEERKYPVFEGALVYVNNGDQVKKGDHLADRFLFEEEYLSSTEYKIFESHYPTMFDVEERTENDRPIVVITDIDPEVSKETGLKMGDIITENEYEAYLQIYPEKIVADAGAQAIKKLLQNLDLEELRAELEAELKKLPASSSKAMKLRRRLKMVKDFIKSGNKPEWMVLEVVPVIPPDLRPMIQIEGGRFATTDLNELYRRLINRNNRLRKLLELGAPEIILRNEKRMLQEAVDALIHNGSDSEGKRSRRAVLKDRNGRPLKSLTDLLKGKKGRFRRNLLGKRVDYSGRAVIVVGPHLKIHQCGIPKKMAMELFKPFVLAKLLGEGSTSKTMRKVKKAIIEKEMPEAWEVLEEVIKGSVVLLNRAPTLHRMSIQAFEPKLVEGNAIQLHPVVCPPFNADFDGDQMAVHVPLSAAAQAEARFLMLSRYNIISPAHGKPISLPTQDIIIGSYYLTTVGKDFDSLKEEDIRWRFSSPEEAMLAYHLGYIKLHTPILIKVSIKGEEKRIKTTLGRVIFNSILPEDLRDYNRIFDKKQINALVYETFKRYGIDRAADLLDDVKDLGFHYATVSGLTLSLKDLKIPPERDEILKRTWEKVRIIEENYERGFLTEEQRKSEIIRLWMNVTEEITELTSKTLAEDPFNPIYMMVNSGARGNIDQVKQLAGIRGLMIKAYDPRSREIKSKIFKGQAIHEALTFDYPVDKNLREGVDILQFFISTYGARKGQVDTAMNTSFAGYLTRRLVDVAQSVTVTEPDCGTHEGIRAMDLIKDGTVVEKMNEFLFGRVLASDVLDPETKEVLKNPETGKEYTRNTMLTDDDANFLASYKKMVDVVKYDEIDITELSLPNMYAEIAEPVGEYKEGTELTWDVVKAARNEGKYRIKVKMYPVVGTVYANEQPLYDKKGERELLVYQEVINEVVAKLLEENGVEKVLVRPDIIVRSPLTCESEYGVCAACYGMDLSNHKIVNVGEAVGIVAAQSIGEPGTQLTMRTFHVGGVMGASDIVSGLTTVEKTFEPYAFLREEKSGGKKEIRKYYGSEAVLCEVDGFVKDIATDETGRTVIYIEDYAGGIHAYRIPKRAKVKVKKGQKVLRGDTLTTGAIVWWKLLELESEKGVLTAMNLLKIIKNAYVQQGVSIHDKHFEIIFRQMLSMALVIDPGDSDYLPDQLVPLVDIKRTNREILEGNARVEENRKWVIGKMLAKRVITETDDGELVELAQKGEEVTEELLKKFIEAGIKEIDVVEKDRVVTYQILPKEPIKYKRRLLSLKKAALNYPGWLSAAAFEETAWVLTAAAIEGKVDPLIGLKENVIVGQLIPAGTGLDVFAGIQVEETPRAAAEEKLA.

4 residues coordinate Zn(2+): cysteine 63, cysteine 65, cysteine 78, and cysteine 81. Mg(2+) is bound by residues aspartate 753, aspartate 755, and aspartate 757. Zn(2+)-binding residues include cysteine 1107, cysteine 1295, cysteine 1302, and cysteine 1305.

Belongs to the RNA polymerase beta' chain family. The RNAP catalytic core consists of 2 alpha, 1 beta, 1 beta' and 1 omega subunit. When a sigma factor is associated with the core the holoenzyme is formed, which can initiate transcription. The cofactor is Mg(2+). It depends on Zn(2+) as a cofactor.

The enzyme catalyses RNA(n) + a ribonucleoside 5'-triphosphate = RNA(n+1) + diphosphate. Functionally, DNA-dependent RNA polymerase catalyzes the transcription of DNA into RNA using the four ribonucleoside triphosphates as substrates. The chain is DNA-directed RNA polymerase subunit beta' from Thermotoga neapolitana (strain ATCC 49049 / DSM 4359 / NBRC 107923 / NS-E).